The chain runs to 990 residues: Tyrosine-protein phosphatase 3 (990 aa).

4 disordered regions span residues 47–88 (QSQS…SPSV), 100–193 (NKIN…SNIE), 246–414 (PNQQ…SFSQ), and 431–452 (KPEM…HNDL). 2 stretches are compositionally biased toward low complexity: residues 52-88 (NTNT…SPSV) and 100-117 (NKIN…NNNN). The span at 127 to 136 (LKLSNTMIIK) shows a compositional bias: polar residues. Low complexity-rich tracts occupy residues 137–191 (NNNN…SNSN), 250–271 (SSSS…SSLL), 278–293 (NNST…NSSN), 310–327 (QAQV…QHQQ), and 334–413 (NLSS…TSFS). Residues 422-715 (MRLEFEMIKK…IFIFKVINDV (294 aa)) form the Tyrosine-protein phosphatase domain. Positions 437–447 (KKSHKHHQRHY) are enriched in basic residues. Cysteine 650 acts as the Phosphocysteine intermediate in catalysis. The span at 786-795 (PPQQQQDNPF) shows a compositional bias: polar residues. 2 disordered regions span residues 786 to 814 (PPQQ…NISI) and 834 to 990 (LQQQ…IKCF). 2 stretches are compositionally biased toward low complexity: residues 796-806 (SKSSIKISPSP) and 834-850 (LQQQ…DNPP). Residues 851 to 868 (LNMSSNSIKFPPVTSLSS) show a composition bias toward polar residues. Composition is skewed to low complexity over residues 878–916 (NDNN…DNNG) and 924–968 (GSFL…SDNN).

Belongs to the protein-tyrosine phosphatase family. Non-receptor class subfamily. In the anterior-like and prestalk cell types.

Its subcellular location is the cytoplasm. It carries out the reaction O-phospho-L-tyrosyl-[protein] + H2O = L-tyrosyl-[protein] + phosphate. Functionally, seems to dephosphorylate a protein of 130 kDa (p130). In Dictyostelium discoideum (Social amoeba), this protein is Tyrosine-protein phosphatase 3 (ptpC).